Consider the following 268-residue polypeptide: Tryptophan synthase alpha chain (268 aa).

Residues Glu49 and Asp60 each act as proton acceptor in the active site.

It belongs to the TrpA family. Tetramer of two alpha and two beta chains.

It catalyses the reaction (1S,2R)-1-C-(indol-3-yl)glycerol 3-phosphate + L-serine = D-glyceraldehyde 3-phosphate + L-tryptophan + H2O. It functions in the pathway amino-acid biosynthesis; L-tryptophan biosynthesis; L-tryptophan from chorismate: step 5/5. Functionally, the alpha subunit is responsible for the aldol cleavage of indoleglycerol phosphate to indole and glyceraldehyde 3-phosphate. This is Tryptophan synthase alpha chain from Yersinia enterocolitica serotype O:8 / biotype 1B (strain NCTC 13174 / 8081).